A 203-amino-acid polypeptide reads, in one-letter code: Holliday junction branch migration complex subunit RuvA (203 aa).

The segment at 1–64 (MIGRLRGIVL…EDAQLLFGFN (64 aa)) is domain I. The tract at residues 65–142 (NKQERTLFRE…KGLHGDLFTP (78 aa)) is domain II. The tract at residues 143 to 154 (AADLVLTSPASP) is flexible linker. Positions 155–203 (AVDDAEAEAVAALVSLGYKPQEASRMVSKVAQADASSETLIREALRAAL) are domain III.

The protein belongs to the RuvA family. Homotetramer. Forms an RuvA(8)-RuvB(12)-Holliday junction (HJ) complex. HJ DNA is sandwiched between 2 RuvA tetramers; dsDNA enters through RuvA and exits via RuvB. An RuvB hexamer assembles on each DNA strand where it exits the tetramer. Each RuvB hexamer is contacted by two RuvA subunits (via domain III) on 2 adjacent RuvB subunits; this complex drives branch migration. In the full resolvosome a probable DNA-RuvA(4)-RuvB(12)-RuvC(2) complex forms which resolves the HJ.

Its subcellular location is the cytoplasm. In terms of biological role, the RuvA-RuvB-RuvC complex processes Holliday junction (HJ) DNA during genetic recombination and DNA repair, while the RuvA-RuvB complex plays an important role in the rescue of blocked DNA replication forks via replication fork reversal (RFR). RuvA specifically binds to HJ cruciform DNA, conferring on it an open structure. The RuvB hexamer acts as an ATP-dependent pump, pulling dsDNA into and through the RuvAB complex. HJ branch migration allows RuvC to scan DNA until it finds its consensus sequence, where it cleaves and resolves the cruciform DNA. The protein is Holliday junction branch migration complex subunit RuvA of Cronobacter sakazakii (strain ATCC BAA-894) (Enterobacter sakazakii).